A 264-amino-acid chain; its full sequence is Thiazole synthase (264 aa).

Lys-98 acts as the Schiff-base intermediate with DXP in catalysis. 1-deoxy-D-xylulose 5-phosphate is bound by residues Gly-159, 185 to 186 (AG), and 207 to 208 (AS).

The protein belongs to the ThiG family. Homotetramer. Forms heterodimers with either ThiH or ThiS.

It localises to the cytoplasm. The enzyme catalyses [ThiS sulfur-carrier protein]-C-terminal-Gly-aminoethanethioate + 2-iminoacetate + 1-deoxy-D-xylulose 5-phosphate = [ThiS sulfur-carrier protein]-C-terminal Gly-Gly + 2-[(2R,5Z)-2-carboxy-4-methylthiazol-5(2H)-ylidene]ethyl phosphate + 2 H2O + H(+). The protein operates within cofactor biosynthesis; thiamine diphosphate biosynthesis. Functionally, catalyzes the rearrangement of 1-deoxy-D-xylulose 5-phosphate (DXP) to produce the thiazole phosphate moiety of thiamine. Sulfur is provided by the thiocarboxylate moiety of the carrier protein ThiS. In vitro, sulfur can be provided by H(2)S. The protein is Thiazole synthase of Streptomyces griseus subsp. griseus (strain JCM 4626 / CBS 651.72 / NBRC 13350 / KCC S-0626 / ISP 5235).